The primary structure comprises 826 residues: Outer membrane usher protein YehB (826 aa).

Positions 1-22 (MLRMTPLASAIVALLLGIEAYA) are cleaved as a signal peptide. A disulfide bond links C809 and C825.

This sequence belongs to the fimbrial export usher family.

Its subcellular location is the cell outer membrane. Part of the yehABCD fimbrial operon. Could contribute to adhesion to various surfaces in specific environmental niches. Probably involved in the export and assembly of fimbrial subunits across the outer membrane. The protein is Outer membrane usher protein YehB (yehB) of Escherichia coli (strain K12).